Reading from the N-terminus, the 70-residue chain is Exodeoxyribonuclease 7 small subunit (70 aa).

It belongs to the XseB family. In terms of assembly, heterooligomer composed of large and small subunits.

The protein resides in the cytoplasm. It carries out the reaction Exonucleolytic cleavage in either 5'- to 3'- or 3'- to 5'-direction to yield nucleoside 5'-phosphates.. In terms of biological role, bidirectionally degrades single-stranded DNA into large acid-insoluble oligonucleotides, which are then degraded further into small acid-soluble oligonucleotides. The polypeptide is Exodeoxyribonuclease 7 small subunit (Streptococcus pneumoniae serotype 2 (strain D39 / NCTC 7466)).